A 119-amino-acid polypeptide reads, in one-letter code: Large ribosomal subunit protein uL18 (119 aa).

This sequence belongs to the universal ribosomal protein uL18 family. As to quaternary structure, part of the 50S ribosomal subunit; part of the 5S rRNA/L5/L18/L25 subcomplex. Contacts the 5S and 23S rRNAs.

Its function is as follows. This is one of the proteins that bind and probably mediate the attachment of the 5S RNA into the large ribosomal subunit, where it forms part of the central protuberance. The polypeptide is Large ribosomal subunit protein uL18 (Clostridium kluyveri (strain ATCC 8527 / DSM 555 / NBRC 12016 / NCIMB 10680 / K1)).